The following is a 726-amino-acid chain: Catalase-peroxidase (726 aa).

The tract at residues 1–33 (MSTSDDIHNTTATGKCPFHQGGHDQSAGAGTTT) is disordered. Residues 105-226 (WHGAGTYRSI…LGATEMGLIY (122 aa)) constitute a cross-link (tryptophyl-tyrosyl-methioninium (Trp-Tyr) (with M-252)). His-106 functions as the Proton acceptor in the catalytic mechanism. The tryptophyl-tyrosyl-methioninium (Tyr-Met) (with W-105) cross-link spans 226–252 (YVNPEGPDHSGEPLSAAAAIRATFGNM). His-267 lines the heme b pocket.

This sequence belongs to the peroxidase family. Peroxidase/catalase subfamily. Homodimer or homotetramer. Heme b is required as a cofactor. Formation of the three residue Trp-Tyr-Met cross-link is important for the catalase, but not the peroxidase activity of the enzyme.

The enzyme catalyses H2O2 + AH2 = A + 2 H2O. The catalysed reaction is 2 H2O2 = O2 + 2 H2O. Its function is as follows. Bifunctional enzyme with both catalase and broad-spectrum peroxidase activity. This is Catalase-peroxidase from Shigella flexneri.